We begin with the raw amino-acid sequence, 110 residues long: Large ribosomal subunit protein uL22 (110 aa).

Belongs to the universal ribosomal protein uL22 family. As to quaternary structure, part of the 50S ribosomal subunit.

In terms of biological role, this protein binds specifically to 23S rRNA; its binding is stimulated by other ribosomal proteins, e.g. L4, L17, and L20. It is important during the early stages of 50S assembly. It makes multiple contacts with different domains of the 23S rRNA in the assembled 50S subunit and ribosome. Its function is as follows. The globular domain of the protein is located near the polypeptide exit tunnel on the outside of the subunit, while an extended beta-hairpin is found that lines the wall of the exit tunnel in the center of the 70S ribosome. In Paracidovorax citrulli (strain AAC00-1) (Acidovorax citrulli), this protein is Large ribosomal subunit protein uL22.